We begin with the raw amino-acid sequence, 72 residues long: Mitotic-spindle organizing protein 1 (72 aa).

It belongs to the MOZART1 family. Part of the gamma-tubulin complex.

The protein resides in the cytoplasm. It localises to the cytoskeleton. Its subcellular location is the microtubule organizing center. It is found in the centrosome. The protein localises to the spindle. Required for gamma-tubulin complex recruitment to the centrosome. The polypeptide is Mitotic-spindle organizing protein 1 (mzt1) (Xenopus laevis (African clawed frog)).